Reading from the N-terminus, the 313-residue chain is Probable 5-dehydro-4-deoxyglucarate dehydratase 1 (313 aa).

It belongs to the DapA family.

It carries out the reaction 5-dehydro-4-deoxy-D-glucarate + H(+) = 2,5-dioxopentanoate + CO2 + H2O. It functions in the pathway carbohydrate acid metabolism; D-glucarate degradation; 2,5-dioxopentanoate from D-glucarate: step 2/2. The polypeptide is Probable 5-dehydro-4-deoxyglucarate dehydratase 1 (Streptomyces avermitilis (strain ATCC 31267 / DSM 46492 / JCM 5070 / NBRC 14893 / NCIMB 12804 / NRRL 8165 / MA-4680)).